The chain runs to 322 residues: Malate dehydrogenase (322 aa).

NAD(+) contacts are provided by residues 10 to 15 (GSGQIG) and Asp-34. 2 residues coordinate substrate: Arg-83 and Arg-89. NAD(+)-binding positions include Asn-96 and 119–121 (ITN). Asn-121 and Arg-152 together coordinate substrate. The active-site Proton acceptor is the His-176.

It belongs to the LDH/MDH superfamily. MDH type 3 family.

The catalysed reaction is (S)-malate + NAD(+) = oxaloacetate + NADH + H(+). In terms of biological role, catalyzes the reversible oxidation of malate to oxaloacetate. In Bradyrhizobium sp. (strain ORS 278), this protein is Malate dehydrogenase.